We begin with the raw amino-acid sequence, 169 residues long: Photosystem I assembly protein Ycf3 (169 aa).

TPR repeat units lie at residues 35-68 (AFTY…EIDP), 72-105 (SYIL…NPSL), and 120-153 (GEQA…APGN).

Belongs to the Ycf3 family.

It localises to the plastid. Its subcellular location is the chloroplast thylakoid membrane. Essential for the assembly of the photosystem I (PSI) complex. May act as a chaperone-like factor to guide the assembly of the PSI subunits. This Huperzia lucidula (Shining clubmoss) protein is Photosystem I assembly protein Ycf3.